Consider the following 175-residue polypeptide: MDLRALIRLVPDFPRPGILFRDMTPLLQDPAGFRAAIEQLAAGTTGMGSLDYVVGIESRGFILGAALAQHLGLGFVPVRKPGKLPPPVLSQTYSLEYGQDQLQLHAHALRPGERVLIVDDVIATGGTAAATAQLVAQSGAEVGGFAFLIELAFLSGCKALPPGIPAHVVMVEEGN.

This sequence belongs to the purine/pyrimidine phosphoribosyltransferase family. Homodimer.

The protein resides in the cytoplasm. The catalysed reaction is AMP + diphosphate = 5-phospho-alpha-D-ribose 1-diphosphate + adenine. It functions in the pathway purine metabolism; AMP biosynthesis via salvage pathway; AMP from adenine: step 1/1. Catalyzes a salvage reaction resulting in the formation of AMP, that is energically less costly than de novo synthesis. The sequence is that of Adenine phosphoribosyltransferase from Synechococcus sp. (strain JA-2-3B'a(2-13)) (Cyanobacteria bacterium Yellowstone B-Prime).